We begin with the raw amino-acid sequence, 495 residues long: Cytochrome P450 Tp4149 (495 aa).

Transmembrane regions (helical) follow at residues 4-24 (ILSL…MFFI) and 208-228 (YLSM…SWVD). A glycan (N-linked (GlcNAc...) asparagine) is linked at asparagine 419. Cysteine 437 contacts heme.

The protein belongs to the cytochrome P450 family. Requires heme as cofactor.

It is found in the membrane. It participates in secondary metabolite biosynthesis; terpenoid biosynthesis. Probably involved in the biosynthesis of germacrene-derived sesquiterpene lactones. The chain is Cytochrome P450 Tp4149 from Tanacetum parthenium (Feverfew).